The following is a 246-amino-acid chain: Octanoyltransferase (246 aa).

The BPL/LPL catalytic domain occupies 30–227 (GRIGNTLLLL…QFGRVFGHQV (198 aa)). Residues 75–82 (RGGDVTYH), 155–157 (AIG), and 168–170 (GFA) each bind substrate. Cysteine 186 acts as the Acyl-thioester intermediate in catalysis.

The protein belongs to the LipB family.

Its subcellular location is the cytoplasm. It carries out the reaction octanoyl-[ACP] + L-lysyl-[protein] = N(6)-octanoyl-L-lysyl-[protein] + holo-[ACP] + H(+). It participates in protein modification; protein lipoylation via endogenous pathway; protein N(6)-(lipoyl)lysine from octanoyl-[acyl-carrier-protein]: step 1/2. Catalyzes the transfer of endogenously produced octanoic acid from octanoyl-acyl-carrier-protein onto the lipoyl domains of lipoate-dependent enzymes. Lipoyl-ACP can also act as a substrate although octanoyl-ACP is likely to be the physiological substrate. The sequence is that of Octanoyltransferase from Acidobacterium capsulatum (strain ATCC 51196 / DSM 11244 / BCRC 80197 / JCM 7670 / NBRC 15755 / NCIMB 13165 / 161).